The primary structure comprises 727 residues: Kinesin-like protein KIN-14G (727 aa).

3 disordered regions span residues 100–156 (QTAP…LHLR), 172–194 (HLSA…SCSR), and 336–357 (LAGG…GATR). Residues 114-133 (VASSTAGRASRTKSASSTGR) are compositionally biased toward polar residues. The Kinesin motor domain maps to 381-710 (NIRVFCRVRP…LRFAARVNSC (330 aa)). 461–468 (GQTGSGKT) is a binding site for ATP.

The protein belongs to the TRAFAC class myosin-kinesin ATPase superfamily. Kinesin family. KIN-14 subfamily.

This Oryza sativa subsp. japonica (Rice) protein is Kinesin-like protein KIN-14G.